The sequence spans 302 residues: Glutamate/aspartate import solute-binding protein (302 aa).

Residues 1-22 (MQLRKLTTAMLVMGLSAGLAHA) form the signal peptide.

This sequence belongs to the bacterial solute-binding protein 3 family. In terms of assembly, the complex is composed of two ATP-binding proteins (GltL), two transmembrane proteins (GltJ and GltK) and a solute-binding protein (GltI).

The protein resides in the periplasm. Functionally, part of the ABC transporter complex GltIJKL involved in glutamate and aspartate uptake. Binds to both glutamate and aspartate. The protein is Glutamate/aspartate import solute-binding protein (gltI) of Salmonella typhimurium (strain LT2 / SGSC1412 / ATCC 700720).